Consider the following 464-residue polypeptide: Argininosuccinate lyase (464 aa).

This sequence belongs to the lyase 1 family. Argininosuccinate lyase subfamily.

The protein localises to the cytoplasm. It catalyses the reaction 2-(N(omega)-L-arginino)succinate = fumarate + L-arginine. It participates in amino-acid biosynthesis; L-arginine biosynthesis; L-arginine from L-ornithine and carbamoyl phosphate: step 3/3. This chain is Argininosuccinate lyase, found in Pseudomonas syringae pv. syringae (strain B728a).